We begin with the raw amino-acid sequence, 423 residues long: Type II methyltransferase M.BamHI (423 aa).

Basic and acidic residues predominate over residues 397–414 (DFRQDHEGNSKGDKKNEN). The tract at residues 397–423 (DFRQDHEGNSKGDKKNENNDQISLSLE) is disordered.

It belongs to the N(4)/N(6)-methyltransferase family.

It catalyses the reaction a 2'-deoxycytidine in DNA + S-adenosyl-L-methionine = an N(4)-methyl-2'-deoxycytidine in DNA + S-adenosyl-L-homocysteine + H(+). Its function is as follows. A beta subtype methylase, recognizes the double-stranded sequence 5'-GGATCC-3', methylates C-5 on both strands, and protects the DNA from cleavage by the BamHI endonuclease. The polypeptide is Type II methyltransferase M.BamHI (Bacillus amyloliquefaciens (Bacillus velezensis)).